We begin with the raw amino-acid sequence, 172 residues long: 3-hydroxydecanoyl-[acyl-carrier-protein] dehydratase (172 aa).

His-71 is a catalytic residue.

Belongs to the thioester dehydratase family. FabA subfamily. Homodimer.

It is found in the cytoplasm. The catalysed reaction is a (3R)-hydroxyacyl-[ACP] = a (2E)-enoyl-[ACP] + H2O. It catalyses the reaction (3R)-hydroxydecanoyl-[ACP] = (2E)-decenoyl-[ACP] + H2O. The enzyme catalyses (2E)-decenoyl-[ACP] = (3Z)-decenoyl-[ACP]. The protein operates within lipid metabolism; fatty acid biosynthesis. In terms of biological role, necessary for the introduction of cis unsaturation into fatty acids. Catalyzes the dehydration of (3R)-3-hydroxydecanoyl-ACP to E-(2)-decenoyl-ACP and then its isomerization to Z-(3)-decenoyl-ACP. Can catalyze the dehydratase reaction for beta-hydroxyacyl-ACPs with saturated chain lengths up to 16:0, being most active on intermediate chain length. The polypeptide is 3-hydroxydecanoyl-[acyl-carrier-protein] dehydratase (Salmonella choleraesuis (strain SC-B67)).